We begin with the raw amino-acid sequence, 168 residues long: uncharacterized protein (168 aa).

The 166-residue stretch at 1-166 folds into the PfpI endopeptidase domain; that stretch reads MRVLILAENE…FCGELIKILK (166 aa).

The protein belongs to the peptidase C56 family.

This is an uncharacterized protein from Archaeoglobus fulgidus (strain ATCC 49558 / DSM 4304 / JCM 9628 / NBRC 100126 / VC-16).